The sequence spans 677 residues: Mitochondrial disaggregase (677 aa).

A mitochondrion-targeting transit peptide spans 1-57; that stretch reads MMLSAVLRRTAPAPRLFLGLIKSPSLQSRGGAYNRSVITGDRGEPQRLRTAAWVRPG. A disordered region spans residues 64–103; sequence PGRGAATGGRRGERTEIPYLTAASSGRGPSPEETLPGQDS. The segment at 92–126 is autoinhibitory; sequence PSPEETLPGQDSWNGVPNKAGLGMWALAMALVVQC. 4 ANK repeats span residues 133-162, 166-195, 235-265, and 268-297; these read NKDA…DVNA, LGWT…DPNL, KGCT…PLQR, and MGHT…EKQR. Positions 316, 318, 353, 354, 355, 356, 357, 358, 425, and 466 each coordinate ATP. The interval 477–505 is regulatory; slows ATPase and disaggregase activities; it reads LQLRQEALEMSRNRIAENLGDVQISDKIT. R531 is a binding site for ATP. K559 is subject to N6-acetyllysine. R590 serves as a coordination point for ATP.

The protein belongs to the ClpA/ClpB family. In terms of assembly, homododecamer when substrate-bound; the homododecamer consists of 2 homohexamers stacked head-to-head via ANK repeat-mediated interactions. The active substrate-bound form is likely to exist in a dynamic equilibrium between homohexamers and homododecamers. Homotetradecamer in the unbound state which is remodeled upon substrate binding into the homododecamer. Interacts with PHB and PHB2. Interacts with MAVS; the interaction is enhanced by Sendai virus infection. Post-translationally, proteolytically cleaved by protease PARL. ATP-dependent protein disaggregase activity is stimulated by PARL-mediated cleavage of the N-terminal autoinhibitory peptide.

The protein resides in the mitochondrion intermembrane space. It catalyses the reaction ATP + H2O = ADP + phosphate + H(+). Its activity is regulated as follows. Disaggregase activity is inhibited by ADP. Its function is as follows. Functions as a regulatory ATPase and participates in secretion/protein trafficking process. Has ATP-dependent protein disaggregase activity and is required to maintain the solubility of key mitochondrial proteins. Involved in mitochondrial-mediated antiviral innate immunity, activates RIG-I-mediated signal transduction and production of IFNB1 and pro-inflammatory cytokine IL6. Plays a role in granulocyte differentiation. This is Mitochondrial disaggregase from Rattus norvegicus (Rat).